A 154-amino-acid polypeptide reads, in one-letter code: Large ribosomal subunit protein uL16 (154 aa).

Belongs to the universal ribosomal protein uL16 family. As to quaternary structure, part of the 50S ribosomal subunit.

Its function is as follows. Binds 23S rRNA and is also seen to make contacts with the A and possibly P site tRNAs. This Synechococcus sp. (strain RCC307) protein is Large ribosomal subunit protein uL16.